Reading from the N-terminus, the 258-residue chain is Acyl-[acyl-carrier-protein]--UDP-N-acetylglucosamine O-acyltransferase (258 aa).

It belongs to the transferase hexapeptide repeat family. LpxA subfamily. Homotrimer.

The protein localises to the cytoplasm. It carries out the reaction a (3R)-hydroxyacyl-[ACP] + UDP-N-acetyl-alpha-D-glucosamine = a UDP-3-O-[(3R)-3-hydroxyacyl]-N-acetyl-alpha-D-glucosamine + holo-[ACP]. It participates in glycolipid biosynthesis; lipid IV(A) biosynthesis; lipid IV(A) from (3R)-3-hydroxytetradecanoyl-[acyl-carrier-protein] and UDP-N-acetyl-alpha-D-glucosamine: step 1/6. Involved in the biosynthesis of lipid A, a phosphorylated glycolipid that anchors the lipopolysaccharide to the outer membrane of the cell. In Pseudomonas fluorescens (strain SBW25), this protein is Acyl-[acyl-carrier-protein]--UDP-N-acetylglucosamine O-acyltransferase.